Consider the following 482-residue polypeptide: GTPase Obg (482 aa).

An Obg domain is found at 2 to 159 (PRFVDRVVIH…VDLTLELKTV (158 aa)). The OBG-type G domain occupies 160–340 (ADVGLVGFPS…LTFALWEMIV (181 aa)). Residues 166-173 (GFPSAGKS), 191-195 (FTTLV), 212-215 (DVPG), 292-295 (NKVD), and 321-323 (STL) contribute to the GTP site. Mg(2+) is bound by residues Ser173 and Thr193. One can recognise an OCT domain in the interval 358–438 (PIPVDESGFT…IGDMTFDWEP (81 aa)). Residues 441–482 (PAGVDVTMSGRGTDARIDKTDRVGAAERRQARRVRRGQVEPE) are disordered. The segment covering 453-469 (TDARIDKTDRVGAAERR) has biased composition (basic and acidic residues).

Belongs to the TRAFAC class OBG-HflX-like GTPase superfamily. OBG GTPase family. As to quaternary structure, monomer. Mg(2+) is required as a cofactor.

It is found in the cytoplasm. Its function is as follows. An essential GTPase which binds GTP, GDP and possibly (p)ppGpp with moderate affinity, with high nucleotide exchange rates and a fairly low GTP hydrolysis rate. Plays a role in control of the cell cycle, stress response, ribosome biogenesis and in those bacteria that undergo differentiation, in morphogenesis control. The polypeptide is GTPase Obg (Mycobacteroides abscessus (strain ATCC 19977 / DSM 44196 / CCUG 20993 / CIP 104536 / JCM 13569 / NCTC 13031 / TMC 1543 / L948) (Mycobacterium abscessus)).